We begin with the raw amino-acid sequence, 104 residues long: Large ribosomal subunit protein eL42 (104 aa).

The disordered stretch occupies residues 22 to 56 (KVSQAKKSKDNPRAQGNRRYARKQRGYGGQTKPIL).

This sequence belongs to the eukaryotic ribosomal protein eL42 family.

The polypeptide is Large ribosomal subunit protein eL42 (RPL44) (Encephalitozoon cuniculi (strain GB-M1) (Microsporidian parasite)).